A 155-amino-acid chain; its full sequence is Small ribosomal subunit protein uS7cz/uS7cy (155 aa).

It belongs to the universal ribosomal protein uS7 family. Part of the 30S ribosomal subunit.

The protein localises to the plastid. The protein resides in the chloroplast. Functionally, one of the primary rRNA binding proteins, it binds directly to 16S rRNA where it nucleates assembly of the head domain of the 30S subunit. The chain is Small ribosomal subunit protein uS7cz/uS7cy (rps7-A) from Eucalyptus globulus subsp. globulus (Tasmanian blue gum).